The sequence spans 100 residues: Large ribosomal subunit protein bL27 (100 aa).

A propeptide spanning residues 1–9 (MLSINLSLC) is cleaved from the precursor.

Belongs to the bacterial ribosomal protein bL27 family. The N-terminus is cleaved by ribosomal processing cysteine protease Prp.

The protein is Large ribosomal subunit protein bL27 of Clostridium acetobutylicum (strain ATCC 824 / DSM 792 / JCM 1419 / IAM 19013 / LMG 5710 / NBRC 13948 / NRRL B-527 / VKM B-1787 / 2291 / W).